A 193-amino-acid chain; its full sequence is MIRKVKKEIRVIGFDDGTFKFKSRGDKVILVGVIMKGSSDVVGIVTRWITIDGLDVTDAIIDAINSSRFKDLRVVLLKGITYAGFNIVDVSRVFKETGLPVIVVVRKKPDIGAMESALRKHFDDYEVRIKLLRSAGKLVELIPGKLYYQAIGISYDKAAEVIQVTSRNSMVPEALRLAHMIASAVMCGESKKD.

It belongs to the UPF0215 family.

The polypeptide is UPF0215 protein PH0071 (Pyrococcus horikoshii (strain ATCC 700860 / DSM 12428 / JCM 9974 / NBRC 100139 / OT-3)).